A 187-amino-acid polypeptide reads, in one-letter code: ATP synthase subunit b (187 aa).

A helical membrane pass occupies residues 4–24 (LALFALLMVPAILLASGHDSG).

This sequence belongs to the ATPase B chain family. As to quaternary structure, F-type ATPases have 2 components, F(1) - the catalytic core - and F(0) - the membrane proton channel. F(1) has five subunits: alpha(3), beta(3), gamma(1), delta(1), epsilon(1). F(0) has three main subunits: a(1), b(2) and c(10-14). The alpha and beta chains form an alternating ring which encloses part of the gamma chain. F(1) is attached to F(0) by a central stalk formed by the gamma and epsilon chains, while a peripheral stalk is formed by the delta and b chains.

The protein resides in the cell inner membrane. Functionally, f(1)F(0) ATP synthase produces ATP from ADP in the presence of a proton or sodium gradient. F-type ATPases consist of two structural domains, F(1) containing the extramembraneous catalytic core and F(0) containing the membrane proton channel, linked together by a central stalk and a peripheral stalk. During catalysis, ATP synthesis in the catalytic domain of F(1) is coupled via a rotary mechanism of the central stalk subunits to proton translocation. Its function is as follows. Component of the F(0) channel, it forms part of the peripheral stalk, linking F(1) to F(0). This chain is ATP synthase subunit b, found in Sulfurovum sp. (strain NBC37-1).